A 427-amino-acid chain; its full sequence is 3-phosphoshikimate 1-carboxyvinyltransferase (427 aa).

Residues K20, S21, and R25 each coordinate 3-phosphoshikimate. K20 is a binding site for phosphoenolpyruvate. 2 residues coordinate phosphoenolpyruvate: G92 and R120. Residues S166, Q168, D312, and K339 each coordinate 3-phosphoshikimate. Phosphoenolpyruvate is bound at residue Q168. Catalysis depends on D312, which acts as the Proton acceptor. Phosphoenolpyruvate is bound by residues R343 and R385.

Belongs to the EPSP synthase family. As to quaternary structure, monomer.

The protein resides in the cytoplasm. The enzyme catalyses 3-phosphoshikimate + phosphoenolpyruvate = 5-O-(1-carboxyvinyl)-3-phosphoshikimate + phosphate. It participates in metabolic intermediate biosynthesis; chorismate biosynthesis; chorismate from D-erythrose 4-phosphate and phosphoenolpyruvate: step 6/7. Its function is as follows. Catalyzes the transfer of the enolpyruvyl moiety of phosphoenolpyruvate (PEP) to the 5-hydroxyl of shikimate-3-phosphate (S3P) to produce enolpyruvyl shikimate-3-phosphate and inorganic phosphate. In Streptococcus gordonii (strain Challis / ATCC 35105 / BCRC 15272 / CH1 / DL1 / V288), this protein is 3-phosphoshikimate 1-carboxyvinyltransferase.